An 86-amino-acid polypeptide reads, in one-letter code: Small ribosomal subunit protein bS16 (86 aa).

It belongs to the bacterial ribosomal protein bS16 family.

This Legionella pneumophila (strain Paris) protein is Small ribosomal subunit protein bS16.